The sequence spans 3838 residues: Replicase polyprotein 1ab (3838 aa).

A C4-type; atypical zinc finger spans residues Cys-8 to Cys-28. The region spanning Glu-69–His-180 is the Peptidase C31 domain. Residues Glu-69 to Asp-182 are PCP1-alpha. Catalysis depends on for Nsp1-alpha papain-like cysteine proteinase activity residues Cys-76 and His-146. Residues Met-203–Met-204 are important for host EIF2AK2 inhibition. Residues Pro-269 to Tyr-384 are PCP1-beta. The Peptidase C32 domain occupies Pro-269–Gly-385. Catalysis depends on for Nsp1-beta papain-like cysteine proteinase activity residues Cys-276 and His-345. The interval Ile-418–Ser-505 is OTU-like. Residues Thr-420–Ala-527 enclose the Peptidase C33 domain. Catalysis depends on for Nsp2 cysteine proteinase activity residues Cys-429 and His-498. Disordered stretches follow at residues Ala-728–Ala-758 and Ser-1027–Ser-1064. A compositionally biased stretch (basic and acidic residues) spans Asp-737–Asp-749. The next 5 membrane-spanning stretches (helical) occupy residues Leu-1094 to Ser-1114, Gly-1117 to Cys-1137, Gly-1162 to Val-1182, Gly-1211 to Ser-1231, and Trp-1235 to Val-1255. Residues Leu-1132–Val-1255 are HD1. Residues Thr-1310–Asn-1334 form a WCCH region. 4 consecutive transmembrane segments (helical) span residues Thr-1450 to Phe-1470, Glu-1526 to Leu-1546, Ala-1556 to Leu-1576, and Phe-1592 to Trp-1612. The segment at Leu-1451–Trp-1612 is HD2. The Peptidase S32 domain occupies Gly-1677–Glu-1879. Residues His-1715, Asp-1740, and Ser-1793 each act as charge relay system; for 3C-like serine proteinase activity in the active site. 5 consecutive transmembrane segments (helical) span residues Val-1875–Trp-1895, Ile-1916–Ala-1936, Leu-1960–Gly-1980, Ser-2003–Phe-2023, and His-2029–Ala-2048. The tract at residues Trp-1902–Phe-2023 is HD3. One can recognise a NiRAN domain in the interval Ile-2364–Gly-2527. The region spanning Ala-2765–Asn-2899 is the RdRp catalytic domain. Positions Gly-3021–Leu-3084 constitute an AV ZBD domain. Zn(2+) contacts are provided by Cys-3027, Cys-3030, Cys-3040, Cys-3045, His-3048, His-3050, His-3052, His-3054, Cys-3061, His-3063, Cys-3070, and Cys-3073. Residues Asp-3134–Leu-3293 enclose the (+)RNA virus helicase ATP-binding domain. Residue Val-3168–Lys-3175 coordinates ATP. The region spanning Thr-3294–Leu-3423 is the (+)RNA virus helicase C-terminal domain. The region spanning Glu-3462–Gln-3559 is the AV-Nsp11N/CoV-Nsp15M domain. Residues Leu-3561 to Phe-3683 form the NendoU domain. Catalysis depends on residues His-3592, His-3607, and Lys-3636.

This sequence belongs to the arteriviridae polyprotein family. Nsp1-alpha papain-like: Interacts with host RNF31. As to quaternary structure, interacts with host EIF2AK2; this interaction occurs in host stress granules and leads to EIF2AK2 inhibition. Interacts with host G3BP1; this interaction probably plays a role in Nsp1-beta-mediated inhibition of host EIF2AK2. In terms of assembly, interacts with host DDX18; this interaction redistributes host DDX18 to the cytoplasm. Interacts with host IFITM1. As to quaternary structure, interacts with host DDX5. In terms of assembly, interacts with host OTULIN. Interacts with host LGALS3. Post-translationally, specific enzymatic cleavages in vivo by its own proteases yield mature proteins. Nsp1 is autocleaved into two subunits, Nsp1-alpha and Nsp1-beta. There are two alternative pathways for processing. Either nsp4-5 is cleaved, which represents the major pathway or the nsp5-6 and nsp6-7 are processed, which represents the minor pathway. The major pathway occurs when nsp2 acts as a cofactor for nsp4.

The protein resides in the host nucleus. It is found in the host cytoplasm. It localises to the host membrane. Its subcellular location is the host endoplasmic reticulum. The protein localises to the host perinuclear region. The catalysed reaction is RNA(n) + a ribonucleoside 5'-triphosphate = RNA(n+1) + diphosphate. The enzyme catalyses ATP + H2O = ADP + phosphate + H(+). It catalyses the reaction Thiol-dependent hydrolysis of ester, thioester, amide, peptide and isopeptide bonds formed by the C-terminal Gly of ubiquitin (a 76-residue protein attached to proteins as an intracellular targeting signal).. It carries out the reaction uridylyl-uridylyl-ribonucleotide-RNA = a 3'-end uridylyl-2',3'-cyclophospho-uridine-RNA + a 5'-end dephospho-ribonucleoside-RNA. Its function is as follows. Contains the activities necessary for the transcription of negative stranded RNA, leader RNA, subgenomic mRNAs and progeny virion RNA as well as proteinases responsible for the cleavage of the polyprotein into functional products. Functionally, inhibits host IFN-beta production. Plays a role in the degradation of the host transcriptional activator CREBBP protein. The degradation of host CREBBP which is a key component of the IFN enhanceosome is likely responsible for the inhibition of interferon mediated by Nsp1-alpha. Also participates in the inhibition of host NF-kappa-B activation by counteracting LUBAC-dependent induction of NF-kappa-B. Reduces host NEMO ubiquitination by blocking the interaction between the two LUBAC complex components RNF31 and SHARPIN. Plays a role in blocking host mRNA nuclear export to the cytoplasm and subversion of host protein synthesis. Additionally, inhibits the interferon-activated JAK/STAT signal transduction by mediating the ubiquitination and subsequent proteasomal degradation of host KPNA1. Repurposes the host antiviral stress granules into a proviral platform to counteract the EIF2AK2/PKR restriction, thereby regulating the host inflammatory response. In terms of biological role, multifunctional protein that acts as a viral protease and as a viral antagonist of host immune response. Cleaves the nsp2/nsp3 site in the viral polyprotein. Displays deubiquitinating activity that cleaves both ubiquitinated and ISGylated products and therefore inhibits ubiquitin and ISG15-dependent host innate immunity. Also deubiquinates host NFKBIA, thereby interfering with NFKBIA degradation and impairing subsequent NF-kappa-B activation. Its function is as follows. Plays a role in the inhibition of the immune response by interacting with host IFITM1. This interaction leads to the proteasomal degradation of the IFN-induced antiviral protein IFITM1. Functionally, cleaves the majority of cleavage sites present in the C-terminus of the polyprotein. Triggers host apoptosis through caspase-3, -8, and -9 activations. Subverts host innate immune responses through its protease activity. Targets the NF-kappa-B essential modulator NEMO and mediates its cleavage. Blocks host interferon beta induction and downstream signaling by cleaving mitochondrial MAVS, dislodging it from the mitochondria. Impairs host defense by cleaving host mRNA-decapping enzyme DCP1A to attenuate its antiviral activity. Plays a role in the initial induction of autophagosomes from host endoplasmic reticulum. In terms of biological role, plays a role in the inhibition of host STAT3 signaling pathway by inducing the degradation of STAT3. Its function is as follows. Responsible for replication and transcription of the viral RNA genome. Functionally, displays RNA and DNA duplex-unwinding activities with 5' to 3' polarity. Plays a role in viral transcription/replication and prevents the simultaneous activation of host cell dsRNA sensors, such as MDA5/IFIH1, OAS, PKR and NLRP3 inflammasome. Acts by degrading the 5'-polyuridines generated during replication of the poly(A) region of viral genomic and subgenomic RNAs. Catalyzes a two-step reaction in which a 2'3'-cyclic phosphate (2'3'-cP) is first generated by 2'-O transesterification, which is then hydrolyzed to a 3'-phosphate (3'-P). If not degraded, poly(U) RNA would hybridize with poly(A) RNA tails and activate host dsRNA sensors. Also plays a role in the inhibition of host type I interferon production by recruiting host OTULIN to promote removal of linear ubiquitination targeting host NEMO. This is Replicase polyprotein 1ab from Sus scrofa (Pig).